The chain runs to 141 residues: Nucleoside diphosphate kinase (141 aa).

6 residues coordinate ATP: Lys9, Phe57, Arg85, Thr91, Arg102, and Asn112. Residue His115 is the Pros-phosphohistidine intermediate of the active site.

The protein belongs to the NDK family. As to quaternary structure, homotetramer. The cofactor is Mg(2+).

It is found in the cytoplasm. The enzyme catalyses a 2'-deoxyribonucleoside 5'-diphosphate + ATP = a 2'-deoxyribonucleoside 5'-triphosphate + ADP. It carries out the reaction a ribonucleoside 5'-diphosphate + ATP = a ribonucleoside 5'-triphosphate + ADP. Its function is as follows. Major role in the synthesis of nucleoside triphosphates other than ATP. The ATP gamma phosphate is transferred to the NDP beta phosphate via a ping-pong mechanism, using a phosphorylated active-site intermediate. The protein is Nucleoside diphosphate kinase of Chlamydia trachomatis serovar L2 (strain ATCC VR-902B / DSM 19102 / 434/Bu).